Reading from the N-terminus, the 1942-residue chain is Probable helicase with zinc finger domain (1942 aa).

A C3H1-type zinc finger spans residues 178–206 (SEEYTLCKRFLEQGICRYGAQCTSAHSQE). Ser248 bears the Phosphoserine mark. Residue 668–675 (GPYGTGKT) coordinates ATP. The DEAA box motif lies at 794-797 (DEAA). Positions 1117-1127 (SGSTNKQQQSP) are enriched in polar residues. The segment at 1117–1141 (SGSTNKQQQSPPKGKSLHHTQNDHF) is disordered. Thr1163 is modified (phosphothreonine). Arg1245 is modified (omega-N-methylarginine). Disordered regions lie at residues 1246-1345 (GSPI…INLP), 1386-1429 (NLPE…GPNN), 1527-1552 (QGSA…GLHQ), and 1608-1637 (RQVQ…FNDN). 2 stretches are compositionally biased toward basic and acidic residues: residues 1268–1281 (HQEK…RNGK) and 1292–1308 (NKIR…KQVD). A compositionally biased stretch (low complexity) spans 1399–1412 (NQVVQQQSQLNQQP). Ser1614 is modified (phosphoserine). Low complexity predominate over residues 1623 to 1636 (SSTDHSSHFSNFND). Residues Ser1645, Ser1738, Ser1741, and Ser1766 each carry the phosphoserine modification. Disordered stretches follow at residues 1729–1779 (FHPL…TPQD), 1792–1843 (NQSS…PEDQ), and 1870–1942 (MPNK…SYFK). Over residues 1731–1745 (PLSSRTVSSSSLPSL) the composition is skewed to low complexity. 2 stretches are compositionally biased toward polar residues: residues 1761–1779 (RISS…TPQD) and 1792–1825 (NQSS…SRTA). 2 stretches are compositionally biased toward low complexity: residues 1876 to 1888 (AESA…QSSA) and 1920 to 1942 (LSLF…SYFK).

It belongs to the DNA2/NAM7 helicase family. In terms of assembly, interacts with SMYD2. Interacts with POLR2A. Interacts with SMYD3; the interaction may bridge SMYD3 and RNA polymerase II. As to expression, expressed predominantly in thymus and brain. Expression is down-regulated in 28 of 95 tested cancer cell lines.

The protein localises to the nucleus. May act as a helicase that plays a role in RNA metabolism in multiple tissues and organs within the developing embryo. The protein is Probable helicase with zinc finger domain (HELZ) of Homo sapiens (Human).